We begin with the raw amino-acid sequence, 164 residues long: UPF0304 protein Asuc_0543 (164 aa).

This sequence belongs to the UPF0304 family.

The polypeptide is UPF0304 protein Asuc_0543 (Actinobacillus succinogenes (strain ATCC 55618 / DSM 22257 / CCUG 43843 / 130Z)).